Here is a 122-residue protein sequence, read N- to C-terminus: Serum amyloid A-3 protein (122 aa).

Residues 1 to 18 form the signal peptide; that stretch reads MKPFLAIIFCFLILGVDS. Residues 100–122 form a disordered region; it reads ANKWGRSGKDPNHFRPAGLPSKY.

It belongs to the SAA family. In terms of tissue distribution, expressed by the liver; secreted in plasma.

Its subcellular location is the secreted. In terms of biological role, major acute phase reactant. Apolipoprotein of the HDL complex. In vitro exhibits antimicrobial activity against Escherichia coli, Streptococcus uberis and Pseudomonas aeruginosa. In Mesocricetus auratus (Golden hamster), this protein is Serum amyloid A-3 protein (SAA3).